The sequence spans 161 residues: Cyclic pyranopterin monophosphate synthase (161 aa).

Substrate contacts are provided by residues 75–77 and 113–114; these read LCH and ME. Residue Asp128 is part of the active site.

This sequence belongs to the MoaC family. Homohexamer; trimer of dimers.

The enzyme catalyses (8S)-3',8-cyclo-7,8-dihydroguanosine 5'-triphosphate = cyclic pyranopterin phosphate + diphosphate. It functions in the pathway cofactor biosynthesis; molybdopterin biosynthesis. Catalyzes the conversion of (8S)-3',8-cyclo-7,8-dihydroguanosine 5'-triphosphate to cyclic pyranopterin monophosphate (cPMP). The sequence is that of Cyclic pyranopterin monophosphate synthase from Erwinia tasmaniensis (strain DSM 17950 / CFBP 7177 / CIP 109463 / NCPPB 4357 / Et1/99).